A 387-amino-acid polypeptide reads, in one-letter code: Cytochrome b (387 aa).

Helical transmembrane passes span 32 to 52 (FGFF…LLAM), 76 to 98 (WLLR…VHML), 113 to 133 (LWVS…LGYV), 179 to 199 (FFSL…LHII), 225 to 245 (FTIK…AFVF), 290 to 310 (LGVL…FLTI), 325 to 345 (LFWS…QPAA), and 353 to 373 (LYST…IYMV). Residues His-82 and His-96 each coordinate heme b. Heme b contacts are provided by His-183 and His-197.

This sequence belongs to the cytochrome b family. In terms of assembly, the main subunits of complex b-c1 are: cytochrome b, cytochrome c1 and the Rieske protein. It depends on heme b as a cofactor.

The protein resides in the mitochondrion inner membrane. Functionally, component of the ubiquinol-cytochrome c reductase complex (complex III or cytochrome b-c1 complex) that is part of the mitochondrial respiratory chain. The b-c1 complex mediates electron transfer from ubiquinol to cytochrome c. Contributes to the generation of a proton gradient across the mitochondrial membrane that is then used for ATP synthesis. This is Cytochrome b (cytB) from Dictyostelium citrinum (Slime mold).